Here is a 496-residue protein sequence, read N- to C-terminus: Lysine--tRNA ligase (496 aa).

Mg(2+)-binding residues include E408 and E415.

It belongs to the class-II aminoacyl-tRNA synthetase family. As to quaternary structure, homodimer. It depends on Mg(2+) as a cofactor.

It localises to the cytoplasm. The enzyme catalyses tRNA(Lys) + L-lysine + ATP = L-lysyl-tRNA(Lys) + AMP + diphosphate. This Legionella pneumophila (strain Lens) protein is Lysine--tRNA ligase.